A 228-amino-acid chain; its full sequence is Probable septum site-determining protein MinC (228 aa).

The protein belongs to the MinC family. As to quaternary structure, interacts with MinD and FtsZ.

Cell division inhibitor that blocks the formation of polar Z ring septums. Rapidly oscillates between the poles of the cell to destabilize FtsZ filaments that have formed before they mature into polar Z rings. Prevents FtsZ polymerization. The protein is Probable septum site-determining protein MinC of Symbiobacterium thermophilum (strain DSM 24528 / JCM 14929 / IAM 14863 / T).